A 90-amino-acid polypeptide reads, in one-letter code: uncharacterized protein (90 aa).

The segment at 13–34 (APEGMGPHHAASSSHHSAQHHH) is disordered. A helical transmembrane segment spans residues 52 to 72 (YKMWFLYALILALIFGVFMWW).

Its subcellular location is the host membrane. This is an uncharacterized protein from Invertebrate iridescent virus 3 (IIV-3).